A 236-amino-acid chain; its full sequence is Small ribosomal subunit protein uS3 (236 aa).

The region spanning 39–107 is the KH type-2 domain; it reads IREFLTEELK…DTSLNIVEVR (69 aa). Residues 214-236 form a disordered region; that stretch reads ASERRAVEGDNQGSSSNRRRENA.

The protein belongs to the universal ribosomal protein uS3 family. Part of the 30S ribosomal subunit. Forms a tight complex with proteins S10 and S14.

In terms of biological role, binds the lower part of the 30S subunit head. Binds mRNA in the 70S ribosome, positioning it for translation. The polypeptide is Small ribosomal subunit protein uS3 (Brucella canis (strain ATCC 23365 / NCTC 10854 / RM-666)).